The chain runs to 233 residues: Large ribosomal subunit protein uL1 (233 aa).

The protein belongs to the universal ribosomal protein uL1 family. As to quaternary structure, part of the 50S ribosomal subunit.

Binds directly to 23S rRNA. The L1 stalk is quite mobile in the ribosome, and is involved in E site tRNA release. Functionally, protein L1 is also a translational repressor protein, it controls the translation of the L11 operon by binding to its mRNA. This is Large ribosomal subunit protein uL1 from Campylobacter curvus (strain 525.92).